The chain runs to 605 residues: MPESAAAPIHLPKTSESERLKRIRHTTSHILAMAVQKLFPKAQVTIGPWIENGFYYDFDHPEPFSEKDLRLIEKEMVKIIKRKLPVIREEVTREEAERRIRALGEPYKLEILQDLEEPITIYHLGDEWWDLCAGPHVENTGEIDPKAIALESVAGAYWRGDETKAQLQRIYGTAWETPEQLAEYKRRKEEALRRDHRKVGKELGLFIFADPVGPGLPLWTPRGTVLRSTLEDFLKKEQLKRGYLPVVTPHIARVDLFKTSGHWQKYKEDMFPLMAEDAEAAAHEQGFVLKPMNCPFHIQIYKSELRSYRDLPLRLAEFGTVYRYEQSGELGGLTRVRGFTVDDSHLFVTPEQLDAEFLNVVDLILTVFRCLRLNKFKARLSFRDPKSDKYIGSDEAWSKAEAAIQRAVEQLGMEHFLGIGEAAFYGPKLDFIFEDALGREWQLGTVQVDYNLPERFDLEYVAEDNTRRRPVMIHRAPFGSLERLIGILIEEYAGDFPFWLAPEQVRLLPVGDEQRPYAERVAAQLRERGVRVSVDRSGDRLGKQIRNAETQKIPVMGIIGAKEVEHETVSIRTRAAGDVGTFALEHLIAKLTSAMAAIHGDIDWS.

Residues 195 to 497 form a catalytic region; sequence DHRKVGKELG…LIEEYAGDFP (303 aa). Zn(2+) is bound by residues cysteine 294, histidine 345, and histidine 474.

It belongs to the class-II aminoacyl-tRNA synthetase family. In terms of assembly, homodimer. It depends on Zn(2+) as a cofactor.

It is found in the cytoplasm. The enzyme catalyses tRNA(Thr) + L-threonine + ATP = L-threonyl-tRNA(Thr) + AMP + diphosphate + H(+). Functionally, catalyzes the attachment of threonine to tRNA(Thr) in a two-step reaction: L-threonine is first activated by ATP to form Thr-AMP and then transferred to the acceptor end of tRNA(Thr). Also edits incorrectly charged L-seryl-tRNA(Thr). This chain is Threonine--tRNA ligase, found in Thermosynechococcus vestitus (strain NIES-2133 / IAM M-273 / BP-1).